A 498-amino-acid chain; its full sequence is Alpha-amylase A (498 aa).

The N-terminal stretch at 1–21 is a signal peptide; it reads MMVAWWSLFLYGLQVAAPALA. Cysteines 51 and 59 form a disulfide. Substrate is bound by residues Gln-56 and Trp-104. Asn-142 contacts Ca(2+). Position 143 (His-143) interacts with substrate. The cysteines at positions 171 and 185 are disulfide-linked. Glu-183 and Asp-196 together coordinate Ca(2+). A glycan (N-linked (GlcNAc...) asparagine) is linked at Asn-218. Arg-225 provides a ligand contact to substrate. Ca(2+)-binding residues include Asp-227, His-231, and Glu-251. Asp-227 (nucleophile) is an active-site residue. Substrate is bound at residue 230–231; the sequence is KH. Glu-251 (proton donor) is an active-site residue. Substrate is bound at residue Gly-255. Cys-261 and Cys-304 are oxidised to a cystine. Positions 318 and 365 each coordinate substrate. A disulfide bond links Cys-461 and Cys-496.

Belongs to the glycosyl hydrolase 13 family. Ca(2+) serves as cofactor.

It catalyses the reaction Endohydrolysis of (1-&gt;4)-alpha-D-glucosidic linkages in polysaccharides containing three or more (1-&gt;4)-alpha-linked D-glucose units.. The polypeptide is Alpha-amylase A (amyA) (Aspergillus awamori (Black koji mold)).